Reading from the N-terminus, the 126-residue chain is NADPH-dependent 7-cyano-7-deazaguanine reductase (126 aa).

Residue C40 is the Thioimide intermediate of the active site. Catalysis depends on D47, which acts as the Proton donor. Substrate-binding positions include 62–64 and 81–82; these read IEL and HE.

The protein belongs to the GTP cyclohydrolase I family. QueF type 1 subfamily.

It localises to the cytoplasm. The enzyme catalyses 7-aminomethyl-7-carbaguanine + 2 NADP(+) = 7-cyano-7-deazaguanine + 2 NADPH + 3 H(+). Its pathway is tRNA modification; tRNA-queuosine biosynthesis. Catalyzes the NADPH-dependent reduction of 7-cyano-7-deazaguanine (preQ0) to 7-aminomethyl-7-deazaguanine (preQ1). This Campylobacter jejuni subsp. doylei (strain ATCC BAA-1458 / RM4099 / 269.97) protein is NADPH-dependent 7-cyano-7-deazaguanine reductase.